Reading from the N-terminus, the 359-residue chain is DNA polymerase IV (359 aa).

Positions isoleucine 4 to glycine 184 constitute a UmuC domain. Positions 8 and 102 each coordinate Mg(2+). Glutamate 103 is an active-site residue.

It belongs to the DNA polymerase type-Y family. As to quaternary structure, monomer. Mg(2+) serves as cofactor.

The protein resides in the cytoplasm. It carries out the reaction DNA(n) + a 2'-deoxyribonucleoside 5'-triphosphate = DNA(n+1) + diphosphate. Poorly processive, error-prone DNA polymerase involved in untargeted mutagenesis. Copies undamaged DNA at stalled replication forks, which arise in vivo from mismatched or misaligned primer ends. These misaligned primers can be extended by PolIV. Exhibits no 3'-5' exonuclease (proofreading) activity. May be involved in translesional synthesis, in conjunction with the beta clamp from PolIII. This is DNA polymerase IV from Xanthomonas axonopodis pv. citri (strain 306).